We begin with the raw amino-acid sequence, 168 residues long: N-alpha-acetyltransferase (168 aa).

The N-acetyltransferase domain maps to 13–168 (YQIRLATLSD…EDAYLMAAPL (156 aa)). Tyr38 provides a ligand contact to substrate. Zn(2+) is bound at residue His89. Acetyl-CoA contacts are provided by residues 93–95 (IAV) and 101–106 (KIGVGT). Residues 93–95 (IAV) and 101–106 (KIGVGT) each bind CoA. Glu128 contacts Zn(2+). Acetyl-CoA contacts are provided by residues Asn133 and 140-142 (YKK). Asn133 contacts CoA. Tyr155 serves as a coordination point for substrate.

Belongs to the acetyltransferase family. ARD1 subfamily. Homodimer.

It is found in the cytoplasm. The enzyme catalyses N-terminal L-alanyl-[protein] + acetyl-CoA = N-terminal N(alpha)-acetyl-L-alanyl-[protein] + CoA + H(+). The catalysed reaction is N-terminal L-seryl-[protein] + acetyl-CoA = N-terminal N(alpha)-acetyl-L-seryl-[protein] + CoA + H(+). It catalyses the reaction N-terminal L-methionyl-L-leucyl-[protein] + acetyl-CoA = N-terminal N(alpha)-acetyl-L-methionyl-L-leucyl-[protein] + CoA + H(+). It carries out the reaction N-terminal L-methionyl-L-glutamyl-[protein] + acetyl-CoA = N-terminal N(alpha)-acetyl-L-methionyl-L-glutamyl-[protein] + CoA + H(+). Functionally, displays alpha (N-terminal) acetyltransferase activity. Catalyzes the covalent attachment of an acetyl moiety from acetyl-CoA to the free alpha-amino group at the N-terminus of a protein. This chain is N-alpha-acetyltransferase, found in Sulfolobus acidocaldarius (strain ATCC 33909 / DSM 639 / JCM 8929 / NBRC 15157 / NCIMB 11770).